The sequence spans 634 residues: Chaperone protein HtpG (634 aa).

Positions 1 to 344 (MNETVANNKE…SNDLPLNVSR (344 aa)) are a; substrate-binding. The interval 345–561 (EILQDNKVTQ…DFEMGTQMAK (217 aa)) is b. The interval 562-634 (LLAAAGQAVP…TAINSLLTKG (73 aa)) is c.

The protein belongs to the heat shock protein 90 family. Homodimer.

The protein resides in the cytoplasm. Functionally, molecular chaperone. Has ATPase activity. The sequence is that of Chaperone protein HtpG from Vibrio vulnificus (strain CMCP6).